Consider the following 276-residue polypeptide: MSLWFLVFLSVLQGVTELFPVSSLGHTLLVPALFGMHIDKHAPQLLPFLVALHLGTALALLWYFRARWVALIGGFFAQLGGRKNDDGHLMWALIIGTIPTGIVGLLLEKRIERVFHDLRIVAIALIVNGVLLWLGDRIQRSRAHQAPEKMTFKQAFFVGLAQIGALIPGFSRSGLTMIAGNAAGLTAEKAAEFSFLLGTPIIFAAGVLELPKLFHARDQLADALLGGVLTAIAAYLSVRFLMRYFEGRGRLASFGVYCVIAGVFCLGWFMLHPQPV.

The next 8 membrane-spanning stretches (helical) occupy residues 1–21 (MSLW…LFPV), 44–64 (QLLP…LWYF), 87–107 (GHLM…GLLL), 114–134 (VFHD…LLWL), 150–170 (MTFK…IPGF), 190–210 (AAEF…VLEL), 222–242 (DALL…RFLM), and 251–271 (LASF…WFML).

Belongs to the UppP family.

Its subcellular location is the cell inner membrane. The enzyme catalyses di-trans,octa-cis-undecaprenyl diphosphate + H2O = di-trans,octa-cis-undecaprenyl phosphate + phosphate + H(+). In terms of biological role, catalyzes the dephosphorylation of undecaprenyl diphosphate (UPP). Confers resistance to bacitracin. The chain is Undecaprenyl-diphosphatase 2 from Burkholderia lata (strain ATCC 17760 / DSM 23089 / LMG 22485 / NCIMB 9086 / R18194 / 383).